Here is a 360-residue protein sequence, read N- to C-terminus: DNA replication and repair protein RecF (360 aa).

An ATP-binding site is contributed by 30 to 37; it reads GHNGSGKT.

This sequence belongs to the RecF family.

Its subcellular location is the cytoplasm. In terms of biological role, the RecF protein is involved in DNA metabolism; it is required for DNA replication and normal SOS inducibility. RecF binds preferentially to single-stranded, linear DNA. It also seems to bind ATP. In Actinobacillus pleuropneumoniae serotype 7 (strain AP76), this protein is DNA replication and repair protein RecF.